Consider the following 513-residue polypeptide: ATP synthase subunit alpha 2 (513 aa).

152-159 serves as a coordination point for ATP; sequence GDSKTGKT.

The protein belongs to the ATPase alpha/beta chains family. In terms of assembly, F-type ATPases have 2 components, CF(1) - the catalytic core - and CF(0) - the membrane proton channel. CF(1) has five subunits: alpha(3), beta(3), gamma(1), delta(1), epsilon(1). CF(0) has three main subunits: a(1), b(2) and c(9-12). The alpha and beta chains form an alternating ring which encloses part of the gamma chain. CF(1) is attached to CF(0) by a central stalk formed by the gamma and epsilon chains, while a peripheral stalk is formed by the delta and b chains.

Its subcellular location is the cell membrane. The catalysed reaction is ATP + H2O + 4 H(+)(in) = ADP + phosphate + 5 H(+)(out). Its function is as follows. Produces ATP from ADP in the presence of a proton gradient across the membrane. The alpha chain is a regulatory subunit. The protein is ATP synthase subunit alpha 2 of Mycoplasmopsis pulmonis (strain UAB CTIP) (Mycoplasma pulmonis).